Reading from the N-terminus, the 146-residue chain is Large ribosomal subunit protein uL15 (146 aa).

The segment covering 1-13 (MKLHELRPAEGSR) has biased composition (basic and acidic residues). Positions 1–55 (MKLHELRPAEGSRKSPKRVGRGTGSGLGKTSARGENGQNSRSGGGVRPGFEGGQM) are disordered. Residues 42–52 (SGGGVRPGFEG) show a composition bias toward gly residues.

The protein belongs to the universal ribosomal protein uL15 family. In terms of assembly, part of the 50S ribosomal subunit.

Functionally, binds to the 23S rRNA. This chain is Large ribosomal subunit protein uL15, found in Clostridium tetani (strain Massachusetts / E88).